A 178-amino-acid polypeptide reads, in one-letter code: MAKLHDYYKSSVVAELTKEFSYTSVMQVPRVEKITLNMGVGEAINDKKLLENAAADMAIISGQKPLITKARKSVAGFKIREGYPIGCKVTLRGERMWEFLERLISIALPRVRDFRGVSAKSFDGRGNYSMGVREQIIFPEIDYDKVDRVRGLDITITTSANTDAEGRALLAAFNFPIP.

This sequence belongs to the universal ribosomal protein uL5 family. As to quaternary structure, part of the 50S ribosomal subunit; part of the 5S rRNA/L5/L18/L25 subcomplex. Contacts the 5S rRNA and the P site tRNA. Forms a bridge to the 30S subunit in the 70S ribosome.

This is one of the proteins that bind and probably mediate the attachment of the 5S RNA into the large ribosomal subunit, where it forms part of the central protuberance. In the 70S ribosome it contacts protein S13 of the 30S subunit (bridge B1b), connecting the 2 subunits; this bridge is implicated in subunit movement. Contacts the P site tRNA; the 5S rRNA and some of its associated proteins might help stabilize positioning of ribosome-bound tRNAs. This Aliivibrio fischeri (strain ATCC 700601 / ES114) (Vibrio fischeri) protein is Large ribosomal subunit protein uL5.